A 201-amino-acid chain; its full sequence is Ras-related protein Rab-1C (201 aa).

The segment at 1–20 is disordered; the sequence is MGCSPSKEGNGSFSSTSTSF. Gly2 carries N-myristoyl glycine lipidation. Cys3 carries the S-palmitoyl cysteine lipid modification. GTP is bound by residues 40–48, 58–65, 88–92, 146–149, and 176–178; these read GDSGVGKSC, FTDSYIST, DTAGQ, NKCD, and SAK. The short motif at 62-70 is the Effector region element; the sequence is YISTIGVDF.

This sequence belongs to the small GTPase superfamily. Rab family. In terms of processing, although this sequence lacks the C-terminal cysteine motifs subject to isoprenylation in other Rab proteins, it does have N-terminal myristoylation and S-palmitoylation sequence motifs.

The sequence is that of Ras-related protein Rab-1C (Rab1C) from Dictyostelium discoideum (Social amoeba).